Reading from the N-terminus, the 429-residue chain is Probable M18 family aminopeptidase 2 (429 aa).

Residues H82, H156, and H401 each contribute to the Zn(2+) site.

It belongs to the peptidase M18 family. Zn(2+) is required as a cofactor.

The polypeptide is Probable M18 family aminopeptidase 2 (Pseudomonas putida (strain GB-1)).